The sequence spans 931 residues: Dipeptidyl aminopeptidase A (931 aa).

The segment covering 1-13 (MSASTHSHKRKNS) has biased composition (basic residues). The interval 1–58 (MSASTHSHKRKNSHLFPQRKSSNSSMDKPFFPNNDSVANTDPQSNENGHTINEIRPTE) is disordered. Topologically, residues 1–119 (MSASTHSHKR…GEWSLPEKRS (119 aa)) are cytoplasmic. Residues 33 to 50 (NNDSVANTDPQSNENGHT) are compositionally biased toward polar residues. Residues 120–140 (YVLVFTLIALSVLVLLVILIP) form a helical; Signal-anchor for type II membrane protein membrane-spanning segment. Topologically, residues 141-931 (SKLLPTKITR…RFDNTEVLHL (791 aa)) are lumenal. Residue asparagine 377 is glycosylated (N-linked (GlcNAc...) asparagine). Serine 785 serves as the catalytic Charge relay system. The N-linked (GlcNAc...) asparagine glycan is linked to asparagine 814. Active-site charge relay system residues include aspartate 863 and histidine 896.

Belongs to the peptidase S9B family.

Its subcellular location is the vacuole membrane. Functionally, responsible for the proteolytic maturation of the alpha-factor precursor. The protein is Dipeptidyl aminopeptidase A (STE13) of Saccharomyces cerevisiae (strain ATCC 204508 / S288c) (Baker's yeast).